Reading from the N-terminus, the 1933-residue chain is Protein TIC 214 (1933 aa).

A run of 6 helical transmembrane segments spans residues Ile-18–Gly-38, Ala-60–Leu-80, Pro-87–Asp-107, Phe-128–Leu-148, Val-176–Ile-196, and Ile-230–Leu-250. 4 disordered regions span residues Ala-266 to Gly-291, Lys-473 to Asn-514, Thr-808 to Pro-832, and Glu-1066 to Ala-1121. The span at Glu-278–Gly-289 shows a compositional bias: acidic residues. The span at Ser-476–Leu-487 shows a compositional bias: polar residues. Basic and acidic residues-rich tracts occupy residues Glu-488 to Asn-514 and Asp-819 to Pro-832. Polar residues predominate over residues Glu-1066 to Asn-1078. A compositionally biased stretch (basic residues) spans Lys-1105–Lys-1115. Residues Leu-1135–Ile-1155 form a helical membrane-spanning segment. The segment at Asn-1562–Thr-1642 is disordered. A compositionally biased stretch (basic and acidic residues) spans Asp-1564–Thr-1642.

This sequence belongs to the TIC214 family. Part of the Tic complex.

Its subcellular location is the plastid. The protein localises to the chloroplast inner membrane. In terms of biological role, involved in protein precursor import into chloroplasts. May be part of an intermediate translocation complex acting as a protein-conducting channel at the inner envelope. In Jasminum nudiflorum (Winter jasmine), this protein is Protein TIC 214.